The chain runs to 644 residues: MVTALSDVNNTDNYGAGQIQVLEGLEAVRKRPGMYIGSTSERGLHHLVWEIVDNSIDEALAGYANQIEVVIEKDNWIKVTDNGRGIPVDIQEKMGRPAVEVILTVLHAGGKFGGGGYKVSGGLHGVGSSVVNALSQDLEVYVHRNETIYHQAYKKGVPQFDLKEVGTTDKTGTVIRFKADGEIFTETTVYNYETLQQRIRELAFLNKGIQITLRDERDEENVREDSYHYEGGIKSYVELLNENKEPIHDEPIYIHQSKDDIEVEIAIQYNSGYATNLLTYANNIHTYEGGTHEDGFKRALTRVLNSYGLSSKIMKEEKDRLSGEDTREGMTAIISIKHGDPQFEGQTKTKLGNSEVRQVVDKLFSEHFERFLYENPQVARTVVEKGIMAARARVAAKKAREVTRRKSALDVASLPGKLADCSSKSPEECEIFLVEGDSAGGSTKSGRDSRTQAILPLRGKILNVEKARLDRILNNNEIRQMITAFGTGIGGDFDLAKARYHKIVIMTDADVDGAHIRTLLLTFFYRFMRPLIEAGYVYIAQPPLYKLTQGKQKYYVYNDRELDKLKSELNPTPKWSIARYKGLGEMNADQLWETTMNPEHRALLQVKLEDAIEADQTFEMLMGDVVENRRQFIEDNAVYANLDF.

The Toprim domain maps to 429–543 (CEIFLVEGDS…AGYVYIAQPP (115 aa)). 3 residues coordinate Mg(2+): glutamate 435, aspartate 508, and aspartate 510.

It belongs to the type II topoisomerase GyrB family. As to quaternary structure, heterotetramer, composed of two GyrA and two GyrB chains. In the heterotetramer, GyrA contains the active site tyrosine that forms a transient covalent intermediate with DNA, while GyrB binds cofactors and catalyzes ATP hydrolysis. It depends on Mg(2+) as a cofactor. Requires Mn(2+) as cofactor. Ca(2+) is required as a cofactor.

The protein resides in the cytoplasm. It catalyses the reaction ATP-dependent breakage, passage and rejoining of double-stranded DNA.. In terms of biological role, a type II topoisomerase that negatively supercoils closed circular double-stranded (ds) DNA in an ATP-dependent manner to modulate DNA topology and maintain chromosomes in an underwound state. Negative supercoiling favors strand separation, and DNA replication, transcription, recombination and repair, all of which involve strand separation. Also able to catalyze the interconversion of other topological isomers of dsDNA rings, including catenanes and knotted rings. Type II topoisomerases break and join 2 DNA strands simultaneously in an ATP-dependent manner. The chain is DNA gyrase subunit B from Staphylococcus aureus (strain USA300).